Reading from the N-terminus, the 391-residue chain is Alanine racemase (391 aa).

Lys46 (proton acceptor; specific for D-alanine) is an active-site residue. Position 46 is an N6-(pyridoxal phosphate)lysine (Lys46). Arg148 provides a ligand contact to substrate. Tyr283 serves as the catalytic Proton acceptor; specific for L-alanine. Met331 is a substrate binding site.

This sequence belongs to the alanine racemase family. Pyridoxal 5'-phosphate is required as a cofactor.

It carries out the reaction L-alanine = D-alanine. It participates in amino-acid biosynthesis; D-alanine biosynthesis; D-alanine from L-alanine: step 1/1. Its function is as follows. Catalyzes the interconversion of L-alanine and D-alanine. May also act on other amino acids. The chain is Alanine racemase (alr) from Streptomyces coelicolor (strain ATCC BAA-471 / A3(2) / M145).